We begin with the raw amino-acid sequence, 263 residues long: MTRRANPAQAALFDEPAVDAADVSFIPLAQQFDALPADWKAVLTPCIAQTNWPELCAFVDGERAAGKPIFPTDVFRALHLTSVDDVRVVILGQDPYHGTGTVDGREIPQAHGLAFSVPAGVRVPPSLRNIYKEIEAEFGCKLPGTSGNLEGWAQQGVLLLNTVLTVEQGQAASHAKRGWERITDCLLEQLARVGHKRVFMLWGSHAQAKRALLSDGHLVLEAPHPSPLSAHRGFLGCGHFKTANDWLAAQRQPTIDWLKPQAA.

Asp-94 (proton acceptor) is an active-site residue.

The protein belongs to the uracil-DNA glycosylase (UDG) superfamily. UNG family.

It localises to the cytoplasm. It catalyses the reaction Hydrolyzes single-stranded DNA or mismatched double-stranded DNA and polynucleotides, releasing free uracil.. Its function is as follows. Excises uracil residues from the DNA which can arise as a result of misincorporation of dUMP residues by DNA polymerase or due to deamination of cytosine. The protein is Uracil-DNA glycosylase of Ralstonia pickettii (strain 12J).